A 319-amino-acid polypeptide reads, in one-letter code: Acetyl-coenzyme A carboxylase carboxyl transferase subunit beta, chloroplastic (319 aa).

The CoA carboxyltransferase N-terminal domain maps to 47-319 (LWVQCDNCES…ELFYVLQSSS (273 aa)). Residues C51, C54, C70, and C73 each coordinate Zn(2+). The segment at 51-73 (CDNCESLLYIRFLRENKSVCEEC) adopts a C4-type zinc-finger fold.

This sequence belongs to the AccD/PCCB family. In terms of assembly, acetyl-CoA carboxylase is a heterohexamer composed of biotin carboxyl carrier protein, biotin carboxylase and 2 subunits each of ACCase subunit alpha and ACCase plastid-coded subunit beta (accD). Zn(2+) is required as a cofactor.

The protein resides in the plastid. It is found in the chloroplast stroma. It catalyses the reaction N(6)-carboxybiotinyl-L-lysyl-[protein] + acetyl-CoA = N(6)-biotinyl-L-lysyl-[protein] + malonyl-CoA. It functions in the pathway lipid metabolism; malonyl-CoA biosynthesis; malonyl-CoA from acetyl-CoA: step 1/1. Its function is as follows. Component of the acetyl coenzyme A carboxylase (ACC) complex. Biotin carboxylase (BC) catalyzes the carboxylation of biotin on its carrier protein (BCCP) and then the CO(2) group is transferred by the transcarboxylase to acetyl-CoA to form malonyl-CoA. The protein is Acetyl-coenzyme A carboxylase carboxyl transferase subunit beta, chloroplastic of Picea abies (Norway spruce).